The primary structure comprises 787 residues: MLPVRNYGETIEEYEVQHLLGKGGFASVYKARCRRTYQDVAIKMIDKKLIHGTGLSSRVRQEVEIHSRLKHPSVLQLYTFFQDANYVYLVLELAHNGELHRYMNQQMSHPFTEADAATILQQVVAGLLYLHSHNIMHRDISLSNLLLSKDMHVKIADFGLATQLKRPDEKHMTMCGTPNFISPEVVSRLSHGLAADVWSVGCLLYTLVVGRPPFDTDAVQSTLNKVVMSEFIMPTHLSFEACDLIEKLLKKNPHERISLEQVLRHPFMSKRSAGAEEPQYNSSKPGACDFYMEAQGQSVASGDSGIVTFASNESRSSQRLRSIEKSAQSSSNPQMLPQIQEEYGYWQPSTEHKPYPMPLSSDNAEWERLGSKGNQPHTAASVITEEQQMRVPPLNTIRLQPTRYKTKNAIMSILRHGEVVLEFVKFRSKLNEDRVTDICRISGDGRRIIIYQPDPGRGLPIREQPPPPESHIAGDKSVYNYDSLPSKHWKKYLYAARFVGLVKSKTPKITYFSSLAKCHLMENMIDFEMSYYSGAKYVKTSPGEELKLYNNYGMLLSDLACPEAKKMIEHGNECFSHCINICNALELAQQSADSRNTCFPVTIGRRPLTDVSHSQRFDGLRDTTNIAYSTPKSHQGSINFSMSTISSVQNGSESVSSTHSHASRAQIQASQQNVPIKRINIPDVGIATELSHGIVQVQFYDGSMISLIPEIQGGGLTYTQCNGVSTYFPKYDGDLPLAVRDRLAQIPQVKLRLKCAPLLSNHRKADNIAMTPKSTTPSTPCYNRIVL.

The Protein kinase domain occupies 14–268 (YEVQHLLGKG…LEQVLRHPFM (255 aa)). Residues 20–28 (LGKGGFASV) and K43 each bind ATP. D139 functions as the Proton acceptor in the catalytic mechanism. The segment at 311-336 (SNESRSSQRLRSIEKSAQSSSNPQML) is disordered. One can recognise a Cryptic POLO box 1 (CPB1) domain in the interval 386–505 (EQQMRVPPLN…ARFVGLVKSK (120 aa)). The region spanning 506–613 (TPKITYFSSL…GRRPLTDVSH (108 aa)) is the Cryptic POLO box 2 (CPB2) domain. The 81-residue stretch at 675-755 (PIKRINIPDV…IPQVKLRLKC (81 aa)) folds into the POLO box domain.

This sequence belongs to the protein kinase superfamily. Ser/Thr protein kinase family. CDC5/Polo subfamily. In terms of assembly, homodimer. Post-translationally, ubiquitinated by the SCF(Slimb) ubiquitin ligase complex; leading to its degradation by the proteasome during interphase and regulating centriole number and ensuring the block to centriole reduplication.

It localises to the cytoplasm. The protein resides in the cytoskeleton. The protein localises to the microtubule organizing center. It is found in the centrosome. Its subcellular location is the centriole. It carries out the reaction L-seryl-[protein] + ATP = O-phospho-L-seryl-[protein] + ADP + H(+). The catalysed reaction is L-threonyl-[protein] + ATP = O-phospho-L-threonyl-[protein] + ADP + H(+). Functionally, serine/threonine-protein kinase that plays a central role in centriole duplication. Able to trigger procentriole formation on the surface of the mother centriole cylinder, using mother centriole as a platform, leading to the recruitment of centriole biogenesis proteins such as sas-6. When overexpressed, it is able to induce centrosome amplification through the simultaneous generation of multiple procentrioles adjoining each parental centriole during S phase. Centrosome amplification following overexpression can initiate tumorigenesis, highlighting the importance of centrosome regulation in cancers. This Drosophila willistoni (Fruit fly) protein is Serine/threonine-protein kinase PLK4 (SAK).